A 312-amino-acid chain; its full sequence is L-type lectin-like domain-containing protein C126.08c (312 aa).

Positions 1–22 are cleaved as a signal peptide; it reads MFFSVKNVFLLGIFGFVLGALA. Topologically, residues 23–280 are extracellular; it reads ETSHLERLSL…QKKGSFKKRL (258 aa). Residues 24 to 248 enclose the L-type lectin-like domain; it reads TSHLERLSLE…EIASILSRTI (225 aa). The helical transmembrane segment at 281–301 threads the bilayer; that stretch reads IILLLSLIVIFSIFALRSYQV. Topologically, residues 302–312 are cytoplasmic; the sequence is QQEKNRRTTVL.

Its subcellular location is the membrane. The protein localises to the endoplasmic reticulum. The protein resides in the golgi apparatus. It localises to the vacuole. This chain is L-type lectin-like domain-containing protein C126.08c, found in Schizosaccharomyces pombe (strain 972 / ATCC 24843) (Fission yeast).